We begin with the raw amino-acid sequence, 725 residues long: LPS-assembly protein LptD (725 aa).

An N-terminal signal peptide occupies residues methionine 1–alanine 25.

The protein belongs to the LptD family. As to quaternary structure, component of the lipopolysaccharide transport and assembly complex. Interacts with LptE and LptA.

Its subcellular location is the cell outer membrane. Functionally, together with LptE, is involved in the assembly of lipopolysaccharide (LPS) at the surface of the outer membrane. The chain is LPS-assembly protein LptD from Nitrosomonas eutropha (strain DSM 101675 / C91 / Nm57).